The sequence spans 529 residues: Intraflagellar transport protein 56 (529 aa).

The disordered stretch occupies residues 1–21 (MLHNRMTTAFERSKEQEHEAA). Positions 11 to 21 (ERSKEQEHEAA) are enriched in basic and acidic residues. TPR repeat units follow at residues 57 to 90 (GNADLWIAYCNFHLGRHEEALEIYTALKKSKNPP), 154 to 187 (SADQMALAAVHFLRTHYQQALECYEEVLQVQPEC), 189 to 221 (AIYMHMALCYYKLGDYLKSEEFLMLYRENAEDS), 285 to 321 (SEARQNLVKLYIEKGQYEDAYKVVQSFEPAVSAEYTL), 359 to 392 (VLGRRAMAAAYFLTGEFEEASMYLESIADIPKES), and 428 to 461 (PVHRTWLGRLLIRAQRSAEAFDLYRDAEKNSLQT).

This sequence belongs to the IFT56 family.

The protein localises to the cell projection. Its subcellular location is the cilium. It localises to the flagellum. It is found in the cytoplasm. The protein resides in the cytoskeleton. The protein localises to the flagellum axoneme. Its subcellular location is the flagellum basal body. Functionally, component of the intraflagellar transport complex B (IFT-B) involved in flagellar assembly. The chain is Intraflagellar transport protein 56 from Giardia intestinalis (strain ATCC 50803 / WB clone C6) (Giardia lamblia).